Reading from the N-terminus, the 104-residue chain is Replication restart protein PriB (104 aa).

The 101-residue stretch at 1 to 101 (MTNRLALSGT…LHAEQIELID (101 aa)) folds into the SSB domain.

Belongs to the PriB family. As to quaternary structure, homodimer. Interacts with PriA and DnaT. Component of the replication restart primosome. Primosome assembly occurs via a 'hand-off' mechanism. PriA binds to replication forks, subsequently PriB then DnaT bind; DnaT then displaces ssDNA to generate the helicase loading substrate.

Its function is as follows. Involved in the restart of stalled replication forks, which reloads the replicative helicase on sites other than the origin of replication; the PriA-PriB pathway is the major replication restart pathway. During primosome assembly it facilitates complex formation between PriA and DnaT on DNA; stabilizes PriA on DNA. Stimulates the DNA unwinding activity of PriA helicase. This chain is Replication restart protein PriB, found in Salmonella agona (strain SL483).